We begin with the raw amino-acid sequence, 603 residues long: NADPH-dependent diflavin oxidoreductase 1 (603 aa).

Residues 10-155 (VTILYGSETG…YYSEWETNLL (146 aa)) form the Flavodoxin-like domain. Residues 16-21 (SETGNA), 64-67 (STTG), 102-111 (IGDSSYPKFN), and Glu-137 each bind FMN. The FAD-binding FR-type domain occupies 209-451 (TNLLLGSVKA…HKSNLKFELP (243 aa)). FAD is bound by residues Arg-359, 390–393 (RLFS), and 422–425 (GLCT). NADP(+) is bound by residues Thr-465 and 521–522 (SR). Trp-603 is an FAD binding site.

It belongs to the NADPH-dependent diflavin oxidoreductase NDOR1 family. In the N-terminal section; belongs to the flavodoxin family. This sequence in the C-terminal section; belongs to the flavoprotein pyridine nucleotide cytochrome reductase family. Interacts with DRE2; as part of the cytosolic iron-sulfur (Fe-S) protein assembly (CIA) machinery. FAD is required as a cofactor. The cofactor is FMN.

It is found in the cytoplasm. It localises to the mitochondrion. The enzyme catalyses 2 oxidized [2Fe-2S]-[protein] + NADPH = 2 reduced [2Fe-2S]-[protein] + NADP(+) + H(+). NADPH-dependent reductase which is a central component of the cytosolic iron-sulfur (Fe-S) protein assembly (CIA) machinery. Transfers electrons from NADPH via its FAD and FMN prosthetic groups to the [2Fe-2S] cluster of DRE2, another key component of the CIA machinery. In turn, this reduced cluster provides electrons for assembly of cytosolic iron-sulfur cluster proteins. Positively controls H(2)O(2)-induced cell death. This chain is NADPH-dependent diflavin oxidoreductase 1, found in Debaryomyces hansenii (strain ATCC 36239 / CBS 767 / BCRC 21394 / JCM 1990 / NBRC 0083 / IGC 2968) (Yeast).